We begin with the raw amino-acid sequence, 258 residues long: Trans-aconitate 2-methyltransferase (258 aa).

The protein belongs to the methyltransferase superfamily. Tam family.

It localises to the cytoplasm. It catalyses the reaction trans-aconitate + S-adenosyl-L-methionine = (E)-3-(methoxycarbonyl)pent-2-enedioate + S-adenosyl-L-homocysteine. Its function is as follows. Catalyzes the S-adenosylmethionine monomethyl esterification of trans-aconitate. This is Trans-aconitate 2-methyltransferase from Acidovorax ebreus (strain TPSY) (Diaphorobacter sp. (strain TPSY)).